Reading from the N-terminus, the 379-residue chain is Subtilisin Carlsberg (379 aa).

The signal sequence occupies residues 1–29 (MMRKKSFWLGMLTAFMLVFTMAFSDSASA). Positions 30-105 (AQPAKNVEKD…VEEDHVAHAL (76 aa)) are excised as a propeptide. The Inhibitor I9 domain occupies 44–102 (FKSGVKTASVKKDIIKESGGKVDKQFRIINAAKAKLDKEALKEVKNDPDVAYVEEDHVA). Q107 is a Ca(2+) binding site. Residues 110–378 (PYGIPLIKAD…KGLINVEAAA (269 aa)) enclose the Peptidase S8 domain. Catalysis depends on D137, which acts as the Charge relay system. Ca(2+) is bound at residue D146. H168 acts as the Charge relay system in catalysis. The Ca(2+) site is built by L179, N181, T183, V185, A273, Y275, and V278. The Charge relay system role is filled by S325.

This sequence belongs to the peptidase S8 family. The cofactor is Ca(2+).

Its subcellular location is the secreted. It carries out the reaction Hydrolysis of proteins with broad specificity for peptide bonds, and a preference for a large uncharged residue in P1. Hydrolyzes peptide amides.. Its activity is regulated as follows. Inhibited by p-chlorophenyl and 1-naphthyl boronic acid derivatives. Functionally, subtilisin is an extracellular alkaline serine protease, it catalyzes the hydrolysis of proteins and peptide amides. Shows high specificity for aromatic and hydrophobic amino acids in the P1 substrate position. May play an important role in the degradation of feather keratin. The sequence is that of Subtilisin Carlsberg from Bacillus licheniformis.